Here is a 420-residue protein sequence, read N- to C-terminus: Acetyl-CoA acetyltransferase A, mitochondrial (420 aa).

Residues 1-33 (MAFCGTRTAARLSHSTRALHNTHRNFASQRTLN) constitute a mitochondrion transit peptide. Cys119 acts as the Acyl-thioester intermediate in catalysis. CoA-binding positions include Tyr212, 251-253 (RVD), and Lys256. Tyr212 contacts K(+). K(+)-binding residues include Ala273 and Ala274. Ser277 provides a ligand contact to CoA. Residue Val374 coordinates K(+). The active-site Proton donor/acceptor is Cys406.

It belongs to the thiolase-like superfamily. Thiolase family. Homotetramer.

It localises to the mitochondrion. It catalyses the reaction 2 acetyl-CoA = acetoacetyl-CoA + CoA. The enzyme catalyses propanoyl-CoA + acetyl-CoA = 2-methyl-3-oxobutanoyl-CoA + CoA. Its pathway is lipid metabolism; fatty acid beta-oxidation. Its function is as follows. This is one of the enzymes that catalyzes the last step of the mitochondrial beta-oxidation pathway, an aerobic process breaking down fatty acids into acetyl-CoA. Using free coenzyme A/CoA, catalyzes the thiolytic cleavage of medium- to long-chain 3-oxoacyl-CoAs into acetyl-CoA and a fatty acyl-CoA shortened by two carbon atoms. The activity of the enzyme is reversible and it can also catalyze the condensation of two acetyl-CoA molecules into acetoacetyl-CoA. Thereby, it plays a major role in ketone body metabolism. The chain is Acetyl-CoA acetyltransferase A, mitochondrial (acat1-a) from Xenopus laevis (African clawed frog).